A 373-amino-acid chain; its full sequence is Forkhead box protein F1 (373 aa).

The interval 1–51 (MTAEIQQPPSQPPAQSSPMSAATDKHGGQPSVMESANCATKTKKTNAGIRR) is disordered. Residues 13–22 (PAQSSPMSAA) show a composition bias toward low complexity. A DNA-binding region (fork-head) is located at residues 54–148 (KPPYSYIALI…EEGSFRRRPR (95 aa)). 2 disordered regions span residues 236–255 (GSSGGDYSHHDSGSPLLGGG) and 283–306 (QPLSPCNSAANPLSSSLSSHSLDQ). The span at 286-306 (SPCNSAANPLSSSLSSHSLDQ) shows a compositional bias: low complexity.

The protein localises to the nucleus. Its function is as follows. Probable transcription factor. Required for smooth muscle (visceral mesoderm) differentiation during gut development. Also required for normal proliferation of the lateral plate mesoderm. Acts as a downstream mediator of bmp4-signaling. In Xenopus tropicalis (Western clawed frog), this protein is Forkhead box protein F1.